Reading from the N-terminus, the 261-residue chain is Eukaryotic translation initiation factor 3 subunit J-A (261 aa).

A compositionally biased stretch (low complexity) spans Met1–Ala11. The segment at Met1–Pro113 is disordered. The sufficient for interaction with EIF3B stretch occupies residues Ala4–Val72. 3 positions are modified to phosphoserine: Ser14, Ser16, and Ser23. The segment covering Glu43–Glu64 has biased composition (acidic residues). Residues Glu65–Lys109 show a composition bias toward basic and acidic residues. Positions Lys73–Thr138 form a coiled coil. A Glycyl lysine isopeptide (Lys-Gly) (interchain with G-Cter in SUMO2) cross-link involves residue Lys109. Thr112 bears the Phosphothreonine mark. At Ser130 the chain carries Phosphoserine. The promotes stable association with the 40S ribosome stretch occupies residues Tyr246 to Met261. Tyr257 bears the Phosphotyrosine mark.

It belongs to the eIF-3 subunit J family. As to quaternary structure, component of the eukaryotic translation initiation factor 3 (eIF-3) complex, which is composed of 13 subunits: EIF3A, EIF3B, EIF3C, EIF3D, EIF3E, EIF3F, EIF3G, EIF3H, EIF3I, EIF3J, EIF3K, EIF3L and EIF3M. The eIF-3 complex appears to include 3 stable modules: module A is composed of EIF3A, EIF3B, EIF3G and EIF3I; module B is composed of EIF3F, EIF3H, and EIF3M; and module C is composed of EIF3C, EIF3D, EIF3E, EIF3K and EIF3L. EIF3C of module C binds EIF3B of module A and EIF3H of module B, thereby linking the three modules. EIF3J is a labile subunit that binds to the eIF-3 complex via EIF3B. The eIF-3 complex interacts with RPS6KB1 under conditions of nutrient depletion. Mitogenic stimulation leads to binding and activation of a complex composed of MTOR and RPTOR, leading to phosphorylation and release of RPS6KB1 and binding of EIF4B to eIF-3. Post-translationally, phosphorylated. Phosphorylation is enhanced upon serum stimulation.

It localises to the cytoplasm. Component of the eukaryotic translation initiation factor 3 (eIF-3) complex, which is required for several steps in the initiation of protein synthesis. The eIF-3 complex associates with the 40S ribosome and facilitates the recruitment of eIF-1, eIF-1A, eIF-2:GTP:methionyl-tRNAi and eIF-5 to form the 43S pre-initiation complex (43S PIC). The eIF-3 complex stimulates mRNA recruitment to the 43S PIC and scanning of the mRNA for AUG recognition. The eIF-3 complex is also required for disassembly and recycling of post-termination ribosomal complexes and subsequently prevents premature joining of the 40S and 60S ribosomal subunits prior to initiation. The eIF-3 complex specifically targets and initiates translation of a subset of mRNAs involved in cell proliferation, including cell cycling, differentiation and apoptosis, and uses different modes of RNA stem-loop binding to exert either translational activation or repression. This subunit binds directly within the mRNA entry channel of the 40S ribosome to the aminoacyl (A) site. It may regulate the interaction between the 43S PIC and mRNA. The polypeptide is Eukaryotic translation initiation factor 3 subunit J-A (Eif3j1) (Mus musculus (Mouse)).